The sequence spans 309 residues: Tyrosine recombinase XerD (309 aa).

In terms of domain architecture, Core-binding (CB) spans M3 to Y88. One can recognise a Tyr recombinase domain in the interval P109 to S302. Residues R158, K182, H254, R257, and H280 contribute to the active site. The O-(3'-phospho-DNA)-tyrosine intermediate role is filled by Y289.

This sequence belongs to the 'phage' integrase family. XerD subfamily. In terms of assembly, forms a cyclic heterotetrameric complex composed of two molecules of XerC and two molecules of XerD.

It localises to the cytoplasm. Functionally, site-specific tyrosine recombinase, which acts by catalyzing the cutting and rejoining of the recombining DNA molecules. The XerC-XerD complex is essential to convert dimers of the bacterial chromosome into monomers to permit their segregation at cell division. It also contributes to the segregational stability of plasmids. The polypeptide is Tyrosine recombinase XerD (Brucella suis biovar 1 (strain 1330)).